Consider the following 221-residue polypeptide: Potassium voltage-gated channel subfamily E member 4 (221 aa).

Residues 1 to 86 are Extracellular-facing; the sequence is MHFLTIYPNC…AGGGSGNGNE (86 aa). The N-linked (GlcNAc...) asparagine glycan is linked to N9. Residues 58-72 are compositionally biased toward polar residues; the sequence is LNSTHPGTAASSSPL. Residues 58 to 77 are disordered; sequence LNSTHPGTAASSSPLESRAA. A helical membrane pass occupies residues 87–107; it reads YFYILVVMSFYGIFLIGIMLG. Topologically, residues 108 to 221 are cytoplasmic; sequence YMKSKRREKK…GSSENIHQNS (114 aa). Positions 175 to 221 are disordered; the sequence is SVSSESSSPDVHLTIQEEGADDELEETSETPLNESSEGSSENIHQNS. A compositionally biased stretch (acidic residues) spans 192 to 202; it reads EGADDELEETS. Positions 203–221 are enriched in polar residues; sequence ETPLNESSEGSSENIHQNS.

Belongs to the potassium channel KCNE family. As to quaternary structure, forms heterooligomers with KCNA3, inhibiting its activity by impairing localization to the cell membrane. The stoichiometry of KCNA3 and KCNE4 in the heterooligomers are 4:1, 4:2, 4:3 or 4:4 respectively. Increasing the number of KCNE4 subunits steadily slows the activation KCNA3 and decreases its abundance at the cell membrane. However, a single subunit of KCNE4 is sufficient for the cooperative enhancement of the inactivating function of the channel. However, a single subunit of KCNE4 is sufficient for the cooperative enhancement of the inactivating function of the channel. Interacts with KCNQ1; impairs KCNQ1 localization in lipid rafts and inhibits voltage-gated potassium channel activity. In terms of tissue distribution, predominantly expressed in embryo and adult uterus. Low expression found in kidney, small intestine, lung and heart. Detected in kidney, thymus, and uterus (at protein level).

The protein localises to the membrane. In terms of biological role, ancillary protein that functions as a regulatory subunit of the voltage-gated potassium (Kv) channel complex composed of pore-forming and potassium-conducting alpha subunits and of regulatory beta subunits. KCNE4 beta subunit modulates the gating kinetics and enhances stability of the channel complex. Associates with KCNQ1/KVLTQ1 alpha subunit to inhibit potassium currents. Its function is as follows. May inhibit KCNQ4-mediated potassium currents. The protein is Potassium voltage-gated channel subfamily E member 4 of Homo sapiens (Human).